The sequence spans 112 residues: Putative pterin-4-alpha-carbinolamine dehydratase (112 aa).

It belongs to the pterin-4-alpha-carbinolamine dehydratase family.

It carries out the reaction (4aS,6R)-4a-hydroxy-L-erythro-5,6,7,8-tetrahydrobiopterin = (6R)-L-erythro-6,7-dihydrobiopterin + H2O. The chain is Putative pterin-4-alpha-carbinolamine dehydratase from Shewanella putrefaciens (strain CN-32 / ATCC BAA-453).